The primary structure comprises 301 residues: Thyrotroph embryonic factor (301 aa).

Disordered regions lie at residues 1–70 (MSDA…ASTM) and 130–174 (ESAS…DPSC). Ser30 carries the phosphoserine modification. A compositionally biased stretch (basic and acidic residues) spans 39–59 (KLMENPPRETRLDKEKGKEKL). Residues 131-158 (SASSSTASPPSSSTAIFQPSETVSSTES) are compositionally biased toward low complexity. Positions 231–294 (DEKYWTRRKK…GKCKTIVSKY (64 aa)) constitute a bZIP domain. Positions 233–253 (KYWTRRKKNNVAAKRSRDARR) are basic motif. Residues 254 to 261 (LKENQITI) are leucine-zipper.

This sequence belongs to the bZIP family. PAR subfamily. As to quaternary structure, binds DNA as a homodimer or a heterodimer. Can form a heterodimer with DBP. Isoform Alpha and isoform Beta are expressed at high levels in lung, bladder, kidney, gut and brain.

Its subcellular location is the nucleus. Transcription factor that binds to and transactivates the TSHB promoter. Binds to a minimal DNA-binding sequence 5'-[TC][AG][AG]TTA[TC][AG]-3'. Also activates the telokin promoter in smooth muscle-specific and calcium-dependent manner. The protein is Thyrotroph embryonic factor (Tef) of Mus musculus (Mouse).